The sequence spans 396 residues: Elongation factor Tu (396 aa).

Residues 11–205 (KPHVNIGTIG…VIDEYIPTPV (195 aa)) form the tr-type G domain. The G1 stretch occupies residues 20-27 (GHVDHGKT). 20 to 27 (GHVDHGKT) is a binding site for GTP. Thr-27 contacts Mg(2+). Residues 61–65 (GITIN) form a G2 region. The segment at 82-85 (DAPG) is G3. GTP-binding positions include 82-86 (DAPGH) and 137-140 (NKTD). The G4 stretch occupies residues 137-140 (NKTD). The tract at residues 175–177 (SAL) is G5.

Belongs to the TRAFAC class translation factor GTPase superfamily. Classic translation factor GTPase family. EF-Tu/EF-1A subfamily. As to quaternary structure, monomer.

Its subcellular location is the cytoplasm. The catalysed reaction is GTP + H2O = GDP + phosphate + H(+). Its function is as follows. GTP hydrolase that promotes the GTP-dependent binding of aminoacyl-tRNA to the A-site of ribosomes during protein biosynthesis. In Oenococcus oeni (strain ATCC BAA-331 / PSU-1), this protein is Elongation factor Tu.